Consider the following 221-residue polypeptide: Transcription repressor OFP8 (221 aa).

Residues 124 to 138 are compositionally biased toward acidic residues; the sequence is EDEGDKEESEDDDSD. The tract at residues 124 to 147 is disordered; sequence EDEGDKEESEDDDSDTLFSSRSFS. The region spanning 158–217 is the OVATE domain; sequence VVKKSKDPYEDFRTSMVEMIVERQIFAPAELQQLLQCFLSLNSRQHHKVIVQVFLEIYAT.

Expressed in roots, rosette and cauline leaves, shoots, stems, flower buds and siliques.

The protein resides in the nucleus. Functionally, transcriptional repressor that regulates multiple aspects of plant growth and development through the regulation of BEL1-LIKE (BLH) and KNOX TALE (KNAT) homeodomain transcription factors. The sequence is that of Transcription repressor OFP8 (OFP8) from Arabidopsis thaliana (Mouse-ear cress).